The primary structure comprises 126 residues: Small ribosomal subunit protein uS12 (126 aa).

Positions 1 to 28 (MPTINQLVRKGRRKVRTKSKSPALDGNP) are disordered. Residues 9–19 (RKGRRKVRTKS) show a composition bias toward basic residues. A 3-methylthioaspartic acid modification is found at Asp89. The tract at residues 106–126 (GVEKRRRSRSKYGVKRPKAAK) is disordered. Residues 109–126 (KRRRSRSKYGVKRPKAAK) show a composition bias toward basic residues.

Belongs to the universal ribosomal protein uS12 family. In terms of assembly, part of the 30S ribosomal subunit. Contacts proteins S8 and S17. May interact with IF1 in the 30S initiation complex.

With S4 and S5 plays an important role in translational accuracy. Functionally, interacts with and stabilizes bases of the 16S rRNA that are involved in tRNA selection in the A site and with the mRNA backbone. Located at the interface of the 30S and 50S subunits, it traverses the body of the 30S subunit contacting proteins on the other side and probably holding the rRNA structure together. The combined cluster of proteins S8, S12 and S17 appears to hold together the shoulder and platform of the 30S subunit. The chain is Small ribosomal subunit protein uS12 from Opitutus terrae (strain DSM 11246 / JCM 15787 / PB90-1).